Here is a 331-residue protein sequence, read N- to C-terminus: MSEIQSLTERALADVAAAQTPDQLEALRVALLGKSGSITAQLKQLGTLPAEQRKAAGEAINLSRDALTAALAERKHTLETAALDARLAGERIDVTLPGRRSERGGLHPVTRTLERIVEIFARLGYELSDGPEIEDDWHNFEALNFPPHHPARAMHDTFYFGDGRLLRTHTSGVQVRYMDAHKPPLRMIAAGKVYRSDSDQTHSPMFHQVEGLLVDEHSNFADLKGTLSEFVRAFFERDFEMRFRPSYFPFVEPGAEVDIAWQQPDGSTRWLEVLGCGMVHPNVLRSVGIDPERYTGFAFGLGVERFAMLRYGVNDLRAFFENDVRFLRQFA.

Glu-252 is a Mg(2+) binding site.

It belongs to the class-II aminoacyl-tRNA synthetase family. Phe-tRNA synthetase alpha subunit type 1 subfamily. As to quaternary structure, tetramer of two alpha and two beta subunits. Mg(2+) serves as cofactor.

The protein localises to the cytoplasm. The catalysed reaction is tRNA(Phe) + L-phenylalanine + ATP = L-phenylalanyl-tRNA(Phe) + AMP + diphosphate + H(+). This Xanthomonas euvesicatoria pv. vesicatoria (strain 85-10) (Xanthomonas campestris pv. vesicatoria) protein is Phenylalanine--tRNA ligase alpha subunit.